A 544-amino-acid chain; its full sequence is CTP synthase (544 aa).

An amidoligase domain region spans residues 1 to 267; that stretch reads MAKFVFVTGG…CRQVLDVLSL (267 aa). A CTP-binding site is contributed by serine 13. Position 13 (serine 13) interacts with UTP. ATP is bound by residues 14 to 19 and aspartate 71; that span reads SIGKGI. Positions 71 and 141 each coordinate Mg(2+). Residues 148–150, 188–193, and lysine 224 contribute to the CTP site; these read DIE and KTKPTQ. Residues 188 to 193 and lysine 224 each bind UTP; that span reads KTKPTQ. The Glutamine amidotransferase type-1 domain occupies 292–534; it reads KVALVGKYVQ…IQAASQRLPQ (243 aa). Residue glycine 354 participates in L-glutamine binding. Cysteine 381 functions as the Nucleophile; for glutamine hydrolysis in the catalytic mechanism. Residues 382 to 385, glutamate 405, and arginine 462 contribute to the L-glutamine site; that span reads LGMQ. Residues histidine 507 and glutamate 509 contribute to the active site.

This sequence belongs to the CTP synthase family. In terms of assembly, homotetramer.

It catalyses the reaction UTP + L-glutamine + ATP + H2O = CTP + L-glutamate + ADP + phosphate + 2 H(+). The enzyme catalyses L-glutamine + H2O = L-glutamate + NH4(+). The catalysed reaction is UTP + NH4(+) + ATP = CTP + ADP + phosphate + 2 H(+). It participates in pyrimidine metabolism; CTP biosynthesis via de novo pathway; CTP from UDP: step 2/2. With respect to regulation, allosterically activated by GTP, when glutamine is the substrate; GTP has no effect on the reaction when ammonia is the substrate. The allosteric effector GTP functions by stabilizing the protein conformation that binds the tetrahedral intermediate(s) formed during glutamine hydrolysis. Inhibited by the product CTP, via allosteric rather than competitive inhibition. Catalyzes the ATP-dependent amination of UTP to CTP with either L-glutamine or ammonia as the source of nitrogen. Regulates intracellular CTP levels through interactions with the four ribonucleotide triphosphates. In Synechococcus sp. (strain RCC307), this protein is CTP synthase.